Consider the following 436-residue polypeptide: MKFSVKNILEMEVCLALGCTEPVAIALGAAAAATLLPGLKFDHIHLIIDPNIYKNGLAVVIPGSGGLTGLDTASALGAFGGDAYGKLEVLSSLSPEMVARASAFLAEGRVKVDLREESGLYVKTTISGGGHVAESLITDVHTNIVSLMLDGEEVADPRLVATEAMSTGNKLAELEEWLRSLTLEDILDLTNELDEADLDFLEEGVQHNLRLAEYGLKHGSGLGIGKDIDRLLKQKLLVKDMTTSARMLTSAAADARMDGVNLPAMSSGGSGNHGLTAILPIWAIKDFIETDRESVLRAIGLSHIITAYIKAHTGRLSAVCGCSVAAGAGATAGITYLVGGDLQQVEGAIKNILEDLAGVICDGAKAGCAIKLNTAAGAAVQAALFSLQGVSVKDTDGIIGDSTRQTVQNIGDLSNYGMVATDKTILKIMRAKHKKG.

The protein belongs to the UPF0597 family.

In Desulfotalea psychrophila (strain LSv54 / DSM 12343), this protein is UPF0597 protein DP0591.